The following is a 31-amino-acid chain: HYYDDTDEEERIVSTVDARGHRPLDKKREEA.

Acidic residues predominate over residues histidine 1–glutamate 10. Positions histidine 1 to alanine 31 are disordered. A Sulfotyrosine; partial modification is found at tyrosine 2. Position 3 is a sulfotyrosine (tyrosine 3). The span at alanine 18–alanine 31 shows a compositional bias: basic and acidic residues.

Heterohexamer; disulfide linked. Contains 2 sets of 3 non-identical chains (alpha, beta and gamma). The 2 heterotrimers are in head to head conformation with the N-termini in a small central domain. In terms of processing, conversion of fibrinogen to fibrin is triggered by thrombin, which cleaves fibrinopeptides A and B from alpha and beta chains, and thus exposes the N-terminal polymerization sites responsible for the formation of the soft clot.

The protein resides in the secreted. In terms of biological role, cleaved by the protease thrombin to yield monomers which, together with fibrinogen alpha (FGA) and fibrinogen gamma (FGG), polymerize to form an insoluble fibrin matrix. Fibrin has a major function in hemostasis as one of the primary components of blood clots. In addition, functions during the early stages of wound repair to stabilize the lesion and guide cell migration during re-epithelialization. Was originally thought to be essential for platelet aggregation, based on in vitro studies using anticoagulated blood. However subsequent studies have shown that it is not absolutely required for thrombus formation in vivo. Enhances expression of SELP in activated platelets. Maternal fibrinogen is essential for successful pregnancy. Fibrin deposition is also associated with infection, where it protects against IFNG-mediated hemorrhage. May also facilitate the antibacterial immune response via both innate and T-cell mediated pathways. The sequence is that of Fibrinogen beta chain (FGB) from Canis lupus familiaris (Dog).